A 647-amino-acid polypeptide reads, in one-letter code: Sialidase (647 aa).

Residues 1 to 37 form the signal peptide; the sequence is MTANPYLRRLPRRRAVSFLLAPALAAATVAGASPAQA. Position 68 (R68) interacts with substrate. Residue D92 is the Proton acceptor of the active site. BNR repeat units follow at residues 102-113, 175-186, and 239-250; these read RRSTDGGRTWGE, ATSTDGGLTWSH, and VYSDDHGRTWRA. The Nucleophile role is filled by E260. Substrate is bound at residue R276. BNR repeat units follow at residues 287 to 298 and 348 to 359; these read AVSTDGGHSYGP and RMSCDDGQTWPV. The active-site Nucleophile is Y370. In terms of domain architecture, F5/8 type C spans 496–646; sequence TFTVTVGLLD…AVAELEVEGQ (151 aa).

Belongs to the glycosyl hydrolase 33 family.

It localises to the secreted. The catalysed reaction is Hydrolysis of alpha-(2-&gt;3)-, alpha-(2-&gt;6)-, alpha-(2-&gt;8)- glycosidic linkages of terminal sialic acid residues in oligosaccharides, glycoproteins, glycolipids, colominic acid and synthetic substrates.. Functionally, to release sialic acids for use as carbon and energy sources for this non-pathogenic bacterium while in pathogenic microorganisms, sialidases have been suggested to be pathogenic factors. This chain is Sialidase (nedA), found in Micromonospora viridifaciens.